Reading from the N-terminus, the 286-residue chain is Beta-lactamase TEM-12 (286 aa).

Positions 1–23 (MSIQHFRVALIPFFAAFCLPVFA) are cleaved as a signal peptide. Catalysis depends on Ser-68, which acts as the Acyl-ester intermediate. Cys-75 and Cys-121 are joined by a disulfide. Glu-166 functions as the Proton acceptor in the catalytic mechanism. Position 232-234 (232-234 (KSG)) interacts with substrate.

Belongs to the class-A beta-lactamase family.

It carries out the reaction a beta-lactam + H2O = a substituted beta-amino acid. Its function is as follows. TEM-type are the most prevalent beta-lactamases in enterobacteria; they hydrolyze the beta-lactam bond in susceptible beta-lactam antibiotics, thus conferring resistance to penicillins and cephalosporins such as ceftazidime. This Klebsiella oxytoca protein is Beta-lactamase TEM-12 (blaT-12b).